The primary structure comprises 1247 residues: E3 ubiquitin-protein ligase hecw-1 (1247 aa).

Positions 602-635 constitute a WW 1 domain; that stretch reads TPPESHWKTYLDAKKRKFYVNHVTKETRWTKPDT. Residues 633-659 form a disordered region; that stretch reads PDTLNNNHIEPETPVHKRLSDRSASPR. The span at 641–653 shows a compositional bias: basic and acidic residues; the sequence is IEPETPVHKRLSD. The WW 2 domain occupies 745-777; it reads QPLPSGWECITMNNRTVFLNHANKETSFYDPRI. Residues 914 to 1247 enclose the HECT domain; it reads DPFVLKKSRL…IVNGMSYSIE (334 aa). Cys1215 (glycyl thioester intermediate) is an active-site residue.

Expressed in the nervous system throughout the body. In the anterior ganglion, expression is limited to the two lateral outer labial neurons OLLL and OLLR.

It localises to the cytoplasm. The catalysed reaction is S-ubiquitinyl-[E2 ubiquitin-conjugating enzyme]-L-cysteine + [acceptor protein]-L-lysine = [E2 ubiquitin-conjugating enzyme]-L-cysteine + N(6)-ubiquitinyl-[acceptor protein]-L-lysine.. Its pathway is protein modification; protein ubiquitination. Its function is as follows. E3 ubiquitin-protein ligase. Functions in the OLL neurons in the anterior ganglion to inhibit avoidance to microbial pathogens such as P.aeruginosa although worms do display avoidance behavior, vacating a P.aeruginosa lawn within 24 hours. Likely to act by inhibiting the neuropeptide receptor npr-1. The protein is E3 ubiquitin-protein ligase hecw-1 of Caenorhabditis elegans.